An 85-amino-acid polypeptide reads, in one-letter code: Large ribosomal subunit protein bL27 (85 aa).

Positions 1 to 21 are disordered; the sequence is MAHKKAGGSTRNGRDSRGKRL.

Belongs to the bacterial ribosomal protein bL27 family.

The polypeptide is Large ribosomal subunit protein bL27 (Blochmanniella floridana).